Here is a 671-residue protein sequence, read N- to C-terminus: Talaropentaene synthase (671 aa).

Aspartate 92 is a Mg(2+) binding site. Positions 92–96 (DDMTD) match the DDXXD 1 motif. Residues 223–231 (NDLYSYEKE) carry the NSE/DTE motif. Residues lysine 389, arginine 392, and histidine 421 each contribute to the isopentenyl diphosphate site. Residues aspartate 428 and aspartate 432 each coordinate Mg(2+). The short motif at 428–432 (DDIED) is the DDXXD 2 element. Residue arginine 437 coordinates dimethylallyl diphosphate. Arginine 438 contacts isopentenyl diphosphate. Residues lysine 515, threonine 516, glutamine 551, asparagine 558, lysine 568, and lysine 578 each coordinate dimethylallyl diphosphate.

This sequence in the N-terminal section; belongs to the terpene synthase family. It in the C-terminal section; belongs to the FPP/GGPP synthase family. It depends on Mg(2+) as a cofactor.

The catalysed reaction is 5 isopentenyl diphosphate + dimethylallyl diphosphate = all-trans-hexaprenyl diphosphate + 5 diphosphate. It carries out the reaction all-trans-hexaprenyl diphosphate = talaropentaene + diphosphate. Its function is as follows. Bifunctional terpene synthase that converts dimethylallyl diphosphate (DMAPP) and isopentenyl diphosphate (IPP) into talaropentaene as a single product. The C-terminal prenyltransferase (PT) domain of MpMS catalyzes formation of hexaprenyl diphosphate (HexPP), whereas the N-terminal terpene cyclase (TC) domain catalyzes the cyclization of HexPP to talaropentaene. The chain is Talaropentaene synthase from Talaromyces verruculosus (Penicillium verruculosum).